Here is a 449-residue protein sequence, read N- to C-terminus: Chromosomal replication initiator protein DnaA (449 aa).

The domain I, interacts with DnaA modulators stretch occupies residues M1 to V72. The tract at residues V72–N111 is domain II. The interval M112–S328 is domain III, AAA+ region. The ATP site is built by G156, G158, K159, and T160. The segment at S329 to S449 is domain IV, binds dsDNA.

Belongs to the DnaA family. Oligomerizes as a right-handed, spiral filament on DNA at oriC.

It localises to the cytoplasm. In terms of biological role, plays an essential role in the initiation and regulation of chromosomal replication. ATP-DnaA binds to the origin of replication (oriC) to initiate formation of the DNA replication initiation complex once per cell cycle. Binds the DnaA box (a 9 base pair repeat at the origin) and separates the double-stranded (ds)DNA. Forms a right-handed helical filament on oriC DNA; dsDNA binds to the exterior of the filament while single-stranded (ss)DNA is stabiized in the filament's interior. The ATP-DnaA-oriC complex binds and stabilizes one strand of the AT-rich DNA unwinding element (DUE), permitting loading of DNA polymerase. After initiation quickly degrades to an ADP-DnaA complex that is not apt for DNA replication. Binds acidic phospholipids. In Halalkalibacterium halodurans (strain ATCC BAA-125 / DSM 18197 / FERM 7344 / JCM 9153 / C-125) (Bacillus halodurans), this protein is Chromosomal replication initiator protein DnaA.